Consider the following 177-residue polypeptide: Large ribosomal subunit protein uL6 (177 aa).

This sequence belongs to the universal ribosomal protein uL6 family. As to quaternary structure, part of the 50S ribosomal subunit.

This protein binds to the 23S rRNA, and is important in its secondary structure. It is located near the subunit interface in the base of the L7/L12 stalk, and near the tRNA binding site of the peptidyltransferase center. This chain is Large ribosomal subunit protein uL6, found in Vibrio cholerae serotype O1 (strain ATCC 39315 / El Tor Inaba N16961).